The sequence spans 613 residues: MTDKITFNDLGLPEFILKAVSDLGFETPSPIQQSCIPHLLNGNDVLGMAQTGSGKTAAFALPLLAQIDPSEKHPQMLVMAPTRELAIQVADACELFVKYAQGTRIVTLYGGQRYDIQLRALKQGAQVVVGTPGRILDHIRRGTLNLSELRFIVLDEADEMLRMGFIDDVETVMAELPENHQTALFSATMPEPIRRITKRFMNDPQEVKIKVNNENAPDIDQSCWYVHGVRKNEALLRFLEVEDFDAAIIFARTKTGTLDITELLEKNGFRSAALNGDMTQQLREQTLDRLRNGSLDIVVATDVAARGIDIERISLVVNYDIPLDAESYVHRIGRTGRAGRSGRALLFVEPRERRLLRNIEHLMKKGINEVELPNHLVLQECRRKKFVAKITKQLEHHDLEQYRSLLEDLFTADQDQENIAAAMLMLLQGKQKLILPPDPPMEKRRRERNDRGDRRENPRSAERRGERKGYGNPQPMDLYRIEVGRADGVEVRHIVGAIANEGDINSRYIGHIKLYDDYTTVELPQGMPKELLQQFAKTRVLNKQMQMSFLGAVKSDNSRGSDDFNGKRKGRGGDFRGERGRERGNDNRGNRKFNEKSNRTFSDKPRRDRRSSF.

The Q motif motif lies at 5 to 33 (ITFNDLGLPEFILKAVSDLGFETPSPIQQ). The 172-residue stretch at 36-207 (IPHLLNGNDV…KRFMNDPQEV (172 aa)) folds into the Helicase ATP-binding domain. 49-56 (AQTGSGKT) is an ATP binding site. A DEAD box motif is present at residues 155–158 (DEAD). The 148-residue stretch at 231 to 378 (KNEALLRFLE…EVELPNHLVL (148 aa)) folds into the Helicase C-terminal domain. Disordered stretches follow at residues 434–476 (ILPP…PQPM) and 552–613 (AVKS…RSSF). 2 stretches are compositionally biased toward basic and acidic residues: residues 440 to 469 (PMEKRRRERNDRGDRRENPRSAERRGERKG) and 556 to 613 (DNSR…RSSF).

The protein belongs to the DEAD box helicase family. DeaD/CsdA subfamily.

The protein resides in the cytoplasm. The catalysed reaction is ATP + H2O = ADP + phosphate + H(+). Functionally, DEAD-box RNA helicase involved in various cellular processes at low temperature, including ribosome biogenesis, mRNA degradation and translation initiation. The sequence is that of ATP-dependent RNA helicase DeaD from Haemophilus influenzae (strain ATCC 51907 / DSM 11121 / KW20 / Rd).